A 593-amino-acid chain; its full sequence is UvrABC system protein C (593 aa).

In terms of domain architecture, GIY-YIG spans 14–91 (DSPGCYLHKD…IQENMPKYNI (78 aa)). Positions 196 to 231 (NKIVNGLTEKMKSAAMTMEFERAAEYRDLIEAISLL) constitute a UVR domain.

Belongs to the UvrC family. Interacts with UvrB in an incision complex.

The protein resides in the cytoplasm. Functionally, the UvrABC repair system catalyzes the recognition and processing of DNA lesions. UvrC both incises the 5' and 3' sides of the lesion. The N-terminal half is responsible for the 3' incision and the C-terminal half is responsible for the 5' incision. The chain is UvrABC system protein C from Streptococcus agalactiae serotype Ia (strain ATCC 27591 / A909 / CDC SS700).